The sequence spans 354 residues: Holliday junction branch migration complex subunit RuvB (354 aa).

A compositionally biased stretch (polar residues) spans 1–10 (MAIKRNQGSN). The segment at 1–36 (MAIKRNQGSNPKPEKKERLTKAETHQEQDNLEESIR) is disordered. The span at 12 to 36 (KPEKKERLTKAETHQEQDNLEESIR) shows a compositional bias: basic and acidic residues. Residues 13 to 196 (PEKKERLTKA…FGLIQRLKFY (184 aa)) are large ATPase domain (RuvB-L). Residues Ile-35, Arg-36, Gly-77, Lys-80, Thr-81, Thr-82, 143–145 (EDY), Arg-186, Tyr-196, and Arg-233 each bind ATP. Position 81 (Thr-81) interacts with Mg(2+). Residues 197 to 267 (EPEELALIIK…LAAEALDIYQ (71 aa)) form a small ATPAse domain (RuvB-S) region. The interval 270-354 (PQGLDWTDRL…EEQLSIFSEQ (85 aa)) is head domain (RuvB-H). 2 residues coordinate DNA: Arg-325 and Arg-330.

It belongs to the RuvB family. In terms of assembly, homohexamer. Forms an RuvA(8)-RuvB(12)-Holliday junction (HJ) complex. HJ DNA is sandwiched between 2 RuvA tetramers; dsDNA enters through RuvA and exits via RuvB. An RuvB hexamer assembles on each DNA strand where it exits the tetramer. Each RuvB hexamer is contacted by two RuvA subunits (via domain III) on 2 adjacent RuvB subunits; this complex drives branch migration. In the full resolvosome a probable DNA-RuvA(4)-RuvB(12)-RuvC(2) complex forms which resolves the HJ.

The protein resides in the cytoplasm. It carries out the reaction ATP + H2O = ADP + phosphate + H(+). The RuvA-RuvB-RuvC complex processes Holliday junction (HJ) DNA during genetic recombination and DNA repair, while the RuvA-RuvB complex plays an important role in the rescue of blocked DNA replication forks via replication fork reversal (RFR). RuvA specifically binds to HJ cruciform DNA, conferring on it an open structure. The RuvB hexamer acts as an ATP-dependent pump, pulling dsDNA into and through the RuvAB complex. RuvB forms 2 homohexamers on either side of HJ DNA bound by 1 or 2 RuvA tetramers; 4 subunits per hexamer contact DNA at a time. Coordinated motions by a converter formed by DNA-disengaged RuvB subunits stimulates ATP hydrolysis and nucleotide exchange. Immobilization of the converter enables RuvB to convert the ATP-contained energy into a lever motion, pulling 2 nucleotides of DNA out of the RuvA tetramer per ATP hydrolyzed, thus driving DNA branch migration. The RuvB motors rotate together with the DNA substrate, which together with the progressing nucleotide cycle form the mechanistic basis for DNA recombination by continuous HJ branch migration. Branch migration allows RuvC to scan DNA until it finds its consensus sequence, where it cleaves and resolves cruciform DNA. In Crocosphaera subtropica (strain ATCC 51142 / BH68) (Cyanothece sp. (strain ATCC 51142)), this protein is Holliday junction branch migration complex subunit RuvB.